The primary structure comprises 348 residues: (+)-germacrene D synthase (348 aa).

D97, D101, N242, and S246 together coordinate Mg(2+). Residues 97–101 carry the DDXXD motif motif; that stretch reads DDILD.

Belongs to the terpene synthase family. The cofactor is Mg(2+).

The catalysed reaction is (2E,6E)-farnesyl diphosphate = (+)-germacrene D + diphosphate. It participates in secondary metabolite biosynthesis; terpenoid biosynthesis. In terms of biological role, sesquiterpene synthase converting farnesyl diphosphate to eight sesquiterpenes, with (+)-germacrene D and an unidentified oxygenated sesquiterpene as the major products. Has no diterpene synthase activity. This chain is (+)-germacrene D synthase, found in Selaginella moellendorffii (Spikemoss).